The following is a 701-amino-acid chain: MTTDTARRHTGAERANEMTYEQLARELLLVGPAPTNEDLKLRYLDVLIDNGLNPPGPPKRILIVGAGIAGLVAGDLLTRAGHDVTILEANANRVGGRIKTFHAKKGEPSPFADPAQYAEAGAMRLPSFHPLTLALIDKLGLKRRLFFNVDIDPQTGNQDAPVPPVFYKSFKDGKTWTNGAPSPEFKEPDKRNHTWIRTNREQVRRAQYATDPSSINEGFHLTGCETRLTVSDMVNQALEPVRDYYSVKQDDGTRVNKPFKEWLAGWADVVRDFDGYSMGRFLREYAEFSDEAVEAIGTIENMTSRLHLAFFHSFLGRSDIDPRATYWEIEGGSRMLPETLAKDLRDQIVMGQRMVRLEYYDPGRDGHHGELTGPGGPAVAIQTVPEGEPYAATQTWTGDLAIVTIPFSSLRFVKVTPPFSYKKRRAVIETHYDQATKVLLEFSRRWWEFTEADWKRELDAIAPGLYDYYQQWGEDDAEAALALPQSVRNLPTGLLGAHPSVDESRIGEEQVEYYRNSELRGGVRPATNAYGGGSTTDNPNRFMYYPSHPVPGTQGGVVLAAYSWSDDAARWDSFDDAERYGYALENLQSVHGRRIEVFYTGAGQTQSWLRDPYACGEAAVYTPHQMTAFHLDVVRPEGPVYFAGEHVSLKHAWIEGAVETAVRAAIAVNEAPVGDTGVTAAAGRRGAAAATEPMREEALTS.

The first 14 residues, 1 to 14 (MTTDTARRHTGAER), serve as a signal peptide directing secretion. The FAD site is built by alanine 69, glutamate 88, alanine 89, arginine 97, methionine 123, arginine 124, methionine 354, and serine 409. Residues 481–520 (LALPQSVRNLPTGLLGAHPSVDESRIGEEQVEYYRNSELR) constitute a propeptide that is removed on maturation. Residues glutamate 645, tryptophan 653, and isoleucine 654 each contribute to the FAD site. Positions 684 to 701 (RRGAAAATEPMREEALTS) are excised as a propeptide.

It belongs to the flavin monoamine oxidase family. LGOX subfamily. The LGOX precursor forms homodimers. The mature enzyme is a heterohexamer composed of 2 alpha chains, 2 beta chains and 2 gamma chains (alpha2beta2gamma2). FAD serves as cofactor. In terms of processing, the precursor form is proteolytically cleaved by an endopeptidase into alpha, beta and gamma chains, which form the stable mature enzyme. Activation by proteolysis occurs after secretion.

It localises to the secreted. The enzyme catalyses L-glutamate + O2 + H2O = H2O2 + 2-oxoglutarate + NH4(+). With respect to regulation, produced as a single polypeptide precursor and is activated by proteolytic cleavage. The LGOX precursor is an active enzyme, but it exhibits lower catalytic efficiency and lower thermostability compared with the mature hexameric LGOX. The mature form is strongly inhibited by p-chloromercuribenzoate, but not by CuCl(2), EDTA and diethyldithiocarbamate. Functionally, catalyzes the oxidative deamination of L-glutamate to 2-ketoglutarate along with the production of ammonia and hydrogen peroxide. Shows strict substrate specificity for L-glutamate, and exhibits only very weak activity with L-aspartate. This chain is L-glutamate oxidase precursor, found in Streptomyces sp.